The chain runs to 701 residues: UvrABC system protein B (701 aa).

Residues 28 to 188 form the Helicase ATP-binding domain; sequence RRIRAGERDV…VDVQYTRNDL (161 aa). 41-48 serves as a coordination point for ATP; that stretch reads GATGTGKS. A Beta-hairpin motif is present at residues 94-117; sequence YYDYYQPEAYIAQTDTYIEKDSSI. The region spanning 432-598 is the Helicase C-terminal domain; the sequence is QIDDLIGEIR…PLRKKIADIL (167 aa). Residues 606-636 are disordered; that stretch reads DDTEAAESVPIGGSGRNSSRGRRAQGEPGRA. The region spanning 656-691 is the UVR domain; that stretch reads ADLIKDLTSQMMVAARDLQFELAARFRDEIADLKKE.

It belongs to the UvrB family. In terms of assembly, forms a heterotetramer with UvrA during the search for lesions. Interacts with UvrC in an incision complex.

It localises to the cytoplasm. In terms of biological role, the UvrABC repair system catalyzes the recognition and processing of DNA lesions. A damage recognition complex composed of 2 UvrA and 2 UvrB subunits scans DNA for abnormalities. Upon binding of the UvrA(2)B(2) complex to a putative damaged site, the DNA wraps around one UvrB monomer. DNA wrap is dependent on ATP binding by UvrB and probably causes local melting of the DNA helix, facilitating insertion of UvrB beta-hairpin between the DNA strands. Then UvrB probes one DNA strand for the presence of a lesion. If a lesion is found the UvrA subunits dissociate and the UvrB-DNA preincision complex is formed. This complex is subsequently bound by UvrC and the second UvrB is released. If no lesion is found, the DNA wraps around the other UvrB subunit that will check the other stand for damage. The sequence is that of UvrABC system protein B from Mycobacterium ulcerans (strain Agy99).